The sequence spans 89 residues: Large ribosomal subunit protein bL27 (89 aa).

The interval 1–21 (MAHKKAGGSSRNGRDSESKRL) is disordered.

It belongs to the bacterial ribosomal protein bL27 family.

This chain is Large ribosomal subunit protein bL27, found in Chelativorans sp. (strain BNC1).